Reading from the N-terminus, the 160-residue chain is Ribosomal RNA large subunit methyltransferase H (160 aa).

S-adenosyl-L-methionine-binding positions include L76, G108, and 127-132 (FGALTW).

This sequence belongs to the RNA methyltransferase RlmH family. Homodimer.

Its subcellular location is the cytoplasm. It carries out the reaction pseudouridine(1915) in 23S rRNA + S-adenosyl-L-methionine = N(3)-methylpseudouridine(1915) in 23S rRNA + S-adenosyl-L-homocysteine + H(+). Specifically methylates the pseudouridine at position 1915 (m3Psi1915) in 23S rRNA. The polypeptide is Ribosomal RNA large subunit methyltransferase H (Mesorhizobium japonicum (strain LMG 29417 / CECT 9101 / MAFF 303099) (Mesorhizobium loti (strain MAFF 303099))).